The following is a 433-amino-acid chain: GTPase Der (433 aa).

2 EngA-type G domains span residues 3 to 167 and 175 to 347; these read NRVV…KEEK and IKVA…KDYT. GTP contacts are provided by residues 9–16, 56–60, 119–122, 181–188, 228–232, and 293–296; these read GRPNVGKS, DTGGL, NKID, DTAGV, and NKMD. In terms of domain architecture, KH-like spans 348 to 432; sequence KQHKTSFVNR…PIKLVIKGRE (85 aa).

Belongs to the TRAFAC class TrmE-Era-EngA-EngB-Septin-like GTPase superfamily. EngA (Der) GTPase family. As to quaternary structure, associates with the 50S ribosomal subunit.

Its function is as follows. GTPase that plays an essential role in the late steps of ribosome biogenesis. The polypeptide is GTPase Der (Aquifex aeolicus (strain VF5)).